A 495-amino-acid polypeptide reads, in one-letter code: Tripartite motif-containing protein 5 (495 aa).

At Ala-2 the chain carries N-acetylalanine. The RING-type zinc-finger motif lies at 15-60 (CPICLELLTEPLSLHCGHSFCQACITANHKKSMLYKEGERSCPVCR). Phosphoserine is present on Ser-87. The segment at 92–133 (QKVDHCARHGEKLLLFCQEDRKVICWLCERSQEHRGHHTFLM) adopts a B box-type zinc-finger fold. Positions 97, 100, 119, and 125 each coordinate Zn(2+). The stretch at 137–225 (AQEYHVKLQT…LTKSETEMVQ (89 aa)) forms a coiled coil. Positions 187-200 (FEQLREILDWEESN) are required for interaction with GABARAP and for autophagy. The B30.2/SPRY domain occupies 283-495 (LKGMLDMFRE…VPMTLCSPSS (213 aa)).

It belongs to the TRIM/RBCC family. In terms of assembly, can form homodimers and homotrimers. In addition to lower-order dimerization, also exhibits a higher-order multimerization and both low- and high-order multimerizations are essential for its restriction activity. Interacts with BTBD1 and BTBD2. Interacts with PSMC4, PSMC5, PSMD7 and HSPA8/HSC70. Interacts (via B30.2/SPRY domain) with HSPA1A/B. Interacts with PSMC2, MAP3K7/TAK1, TAB2 and TAB3. Interacts with SQSTM1. Interacts with TRIM6 and TRIM34. Interacts with ULK1 (phosphorylated form), GABARAP, GABARAPL1, GABARAPL2, MAP1LC3A, MAP1LC3C and BECN1. Degraded in a proteasome-independent fashion in the absence of viral infection but in a proteasome-dependent fashion following exposure to restriction sensitive virus. In terms of processing, autoubiquitinated in a RING finger- and UBE2D2-dependent manner. Monoubiquitinated by TRIM21. Deubiquitinated by Yersinia YopJ. Ubiquitination may not lead to proteasomal degradation.

The protein localises to the cytoplasm. The protein resides in the nucleus. The enzyme catalyses S-ubiquitinyl-[E2 ubiquitin-conjugating enzyme]-L-cysteine + [acceptor protein]-L-lysine = [E2 ubiquitin-conjugating enzyme]-L-cysteine + N(6)-ubiquitinyl-[acceptor protein]-L-lysine.. It participates in protein modification; protein ubiquitination. Functionally, capsid-specific restriction factor that prevents infection from non-host-adapted retroviruses. Blocks viral replication early in the life cycle, after viral entry but before reverse transcription. In addition to acting as a capsid-specific restriction factor, also acts as a pattern recognition receptor that activates innate immune signaling in response to the retroviral capsid lattice. Binding to the viral capsid triggers its E3 ubiquitin ligase activity, and in concert with the heterodimeric ubiquitin conjugating enzyme complex UBE2V1-UBE2N (also known as UBC13-UEV1A complex) generates 'Lys-63'-linked polyubiquitin chains, which in turn are catalysts in the autophosphorylation of the MAP3K7/TAK1 complex (includes TAK1, TAB2, and TAB3). Activation of the MAP3K7/TAK1 complex by autophosphorylation results in the induction and expression of NF-kappa-B and MAPK-responsive inflammatory genes, thereby leading to an innate immune response in the infected cell. Plays a role in regulating autophagy through activation of autophagy regulator BECN1 by causing its dissociation from its inhibitors BCL2 and TAB2. The protein is Tripartite motif-containing protein 5 (TRIM5) of Colobus guereza (Mantled guereza).